Consider the following 233-residue polypeptide: Glucosamine-6-phosphate deaminase (233 aa).

D62 (proton acceptor; for enolization step) is an active-site residue. The For ring-opening step role is filled by N128. H130 (proton acceptor; for ring-opening step) is an active-site residue. E135 (for ring-opening step) is an active-site residue.

The protein belongs to the glucosamine/galactosamine-6-phosphate isomerase family. NagB subfamily.

It carries out the reaction alpha-D-glucosamine 6-phosphate + H2O = beta-D-fructose 6-phosphate + NH4(+). It participates in amino-sugar metabolism; N-acetylneuraminate degradation; D-fructose 6-phosphate from N-acetylneuraminate: step 5/5. In terms of biological role, catalyzes the reversible isomerization-deamination of glucosamine 6-phosphate (GlcN6P) to form fructose 6-phosphate (Fru6P) and ammonium ion. The protein is Glucosamine-6-phosphate deaminase of Streptococcus agalactiae serotype Ia (strain ATCC 27591 / A909 / CDC SS700).